The sequence spans 215 residues: MEKKVLLTGFDPFGGETVNPSWEAVKRLNGAAEGPASIVSEQVPTVFYKSLAVLREAIKKHQPDIIICVGQAGGRMQITPERVAINLNEARIPDNEGNQPVGENISQGGPAAYWTGLPIKRIVEEIKKEGIPAAVSYTAGTFVCNHLFYGLMDEITRHHPHIRGGFIHIPYIPEQTLQKSAPSLSLDLVTKALKIAAVTAAAHEDDIETGGGELH.

Residues E81, C144, and H168 contribute to the active site.

The protein belongs to the peptidase C15 family. As to quaternary structure, homotetramer.

It localises to the cytoplasm. The catalysed reaction is Release of an N-terminal pyroglutamyl group from a polypeptide, the second amino acid generally not being Pro.. Its function is as follows. Removes 5-oxoproline from various penultimate amino acid residues except L-proline. This Bacillus velezensis (strain DSM 23117 / BGSC 10A6 / LMG 26770 / FZB42) (Bacillus amyloliquefaciens subsp. plantarum) protein is Pyrrolidone-carboxylate peptidase.